A 270-amino-acid polypeptide reads, in one-letter code: Putative phosphoenolpyruvate synthase regulatory protein (270 aa).

Position 150 to 157 (150 to 157 (GVSRCGKT)) interacts with ADP.

This sequence belongs to the pyruvate, phosphate/water dikinase regulatory protein family. PSRP subfamily.

The enzyme catalyses [pyruvate, water dikinase] + ADP = [pyruvate, water dikinase]-phosphate + AMP + H(+). It catalyses the reaction [pyruvate, water dikinase]-phosphate + phosphate + H(+) = [pyruvate, water dikinase] + diphosphate. Bifunctional serine/threonine kinase and phosphorylase involved in the regulation of the phosphoenolpyruvate synthase (PEPS) by catalyzing its phosphorylation/dephosphorylation. This chain is Putative phosphoenolpyruvate synthase regulatory protein, found in Shewanella woodyi (strain ATCC 51908 / MS32).